Here is a 580-residue protein sequence, read N- to C-terminus: Glyco-Gag protein (580 aa).

The Cytoplasmic portion of the chain corresponds to 1–51; that stretch reads MSGASSGTAIGAHLFGVSPEYRVLIGDGGAGPSKSLSEVSFSVWYRSRAAR. The chain crosses the membrane as a helical span at residues 52–72; sequence LVILCLVASFLVPCLTFLIAE. At 73 to 580 the chain is on the extracellular side; it reads AVMGQTVTTP…ANSTLLNLED (508 aa). N134 is a glycosylation site (N-linked (GlcNAc...) asparagine; by host). Disordered stretches follow at residues 171 to 282, 491 to 514, and 560 to 580; these read VRPF…NRPQ, ETPE…RHKE, and RDCP…NLED. Over residues 174-193 the composition is skewed to pro residues; sequence FLPPPKPPTPLPQPLSPQPS. Residues 194 to 203 are compositionally biased toward low complexity; that stretch reads APLTSSLYPV. Pro residues-rich tracts occupy residues 204-220 and 230-245; these read VPKP…PDPS and EPPP…PSGP. Positions 491–508 are enriched in basic and acidic residues; that stretch reads ETPEEREERLWQRQEERD. Positions 571-580 are enriched in polar residues; sequence ANSTLLNLED. N572 carries an N-linked (GlcNAc...) asparagine; by host glycan.

Post-translationally, glycosylated by host. In terms of processing, cleaved by host near the middle of the molecule, releasing the c-terminal half containing capsid and nucleoprotein domains op GAG.

It localises to the host cell membrane. Its function is as follows. Plays a role in viral particle release. Presumably acts by facilitating the fission of the virion bud at the cell surface. The protein is Glyco-Gag protein of Feline leukemia virus.